A 617-amino-acid chain; its full sequence is E3 ubiquitin-protein ligase ORTHRUS 1 (617 aa).

The PHD-type zinc-finger motif lies at 12–62 (DGVCMRCQVNPPSEETLTCGTCVTPWHVPCLLPESLASSTGEWECPDCSGV). The RING-type 1 zinc finger occupies 129-169 (CSICIQLPERPITTPCGHNFCLKCFEKWAVGQGKLTCMICR). The 150-residue stretch at 258–407 (TRKQGVLVGE…FKVCRYLFVR (150 aa)) folds into the YDG domain. The RING-type 2 zinc-finger motif lies at 495 to 552 (CQICREVLSLPVTTPCAHNFCKACLEAKFAGITQLRERSNGGRKLRAKKNIMTCPCCT). Residues 563-593 (QVNREMMEIIENFKKSEEEADASISEEEEEE) adopt a coiled-coil conformation. The segment at 575 to 617 (FKKSEEEADASISEEEEEESEPPTKKIKMDNNSVGGSGTSLSA) is disordered. The span at 580–595 (EEADASISEEEEEESE) shows a compositional bias: acidic residues. Positions 604–617 (DNNSVGGSGTSLSA) are enriched in polar residues.

Expressed in inflorescences and leaves.

The protein localises to the nucleus. The catalysed reaction is S-ubiquitinyl-[E2 ubiquitin-conjugating enzyme]-L-cysteine + [acceptor protein]-L-lysine = [E2 ubiquitin-conjugating enzyme]-L-cysteine + N(6)-ubiquitinyl-[acceptor protein]-L-lysine.. It participates in protein modification; protein ubiquitination. Its function is as follows. E3 ubiquitin-protein ligase. Participates in CpG methylation-dependent transcriptional regulation and epigenetic transcriptional silencing. Mediates ubiquitination with the E2 ubiquitin-conjugating enzymes UBC11, UBC8 and UBC8 homologs (e.g. UBC10, UBC11, UBC28 and UBC29) but not with UBC27, UBC30, UBC32, UBC34 and UBC36. Promotes methylation-mediated gene silencing leading, for example, to early flowering. Can bind to CpG, CpNpG, and CpNpN DNA motifs, with a strong preference for methylated forms, and with highest affinity for CpG substrate. This chain is E3 ubiquitin-protein ligase ORTHRUS 1 (ORTH1), found in Arabidopsis thaliana (Mouse-ear cress).